The chain runs to 255 residues: tRNA (guanine-N(1)-)-methyltransferase (255 aa).

S-adenosyl-L-methionine-binding positions include G113 and 133–138 (IGDYVL).

It belongs to the RNA methyltransferase TrmD family. Homodimer.

It localises to the cytoplasm. It carries out the reaction guanosine(37) in tRNA + S-adenosyl-L-methionine = N(1)-methylguanosine(37) in tRNA + S-adenosyl-L-homocysteine + H(+). Functionally, specifically methylates guanosine-37 in various tRNAs. This is tRNA (guanine-N(1)-)-methyltransferase from Klebsiella pneumoniae subsp. pneumoniae (strain ATCC 700721 / MGH 78578).